The chain runs to 540 residues: MAKDIKFSADARSAMVRGVDILADTVKVTLGPKGRNVVLEKSFGSPLITNDGVTIAKEIELEDHFENMGAKLVSEVASKTNDIAGDGTTTATVLTQAIVREGIKNVTAGANPIGIRRGIEAAVATAVSALKETAIPVSNKEAIAQVAAVSSRSEKVGEYISEAMEKVGNDGVITIEESKGMETELDVVEGMQFDRGYLSQYMVTDSEKMVADLDNPYILITDKKISNIQEILPLLESILKTNRPLLIIADDVDGEALPTLVLNKIRGTFNVVAVKAPGFGDRRKAMLEDIAILTGGTVITEDLGLDLKDATIEALGQASKVTVDKDSTVIVEGSGNPEAIANRVAVIKSQIESATSEFDKEKLQERLAKLSGGVAVIKVGAATETELKEMKLRIEDALNATRAAVEEGIVSGGGTAFVSVLDAVAGLELTGDEATGRNIVLRALEEPVRQIALNAGFEGSIVIDRLKNSEAGTGFNAATGEWVNMIEAGIIDPVKVTRSALQNAASVASLILTTEAVVANQPEPASPAPAMDPSMMGGMM.

ATP contacts are provided by residues Thr-29–Pro-32, Asp-86–Thr-90, Gly-413, Asn-476–Ala-478, and Asp-492.

Belongs to the chaperonin (HSP60) family. In terms of assembly, forms a cylinder of 14 subunits composed of two heptameric rings stacked back-to-back. Interacts with the co-chaperonin GroES.

It localises to the cytoplasm. The enzyme catalyses ATP + H2O + a folded polypeptide = ADP + phosphate + an unfolded polypeptide.. Together with its co-chaperonin GroES, plays an essential role in assisting protein folding. The GroEL-GroES system forms a nano-cage that allows encapsulation of the non-native substrate proteins and provides a physical environment optimized to promote and accelerate protein folding. In Streptococcus gordonii, this protein is Chaperonin GroEL.